Consider the following 78-residue polypeptide: Large ribosomal subunit protein bL28 (78 aa).

This sequence belongs to the bacterial ribosomal protein bL28 family.

This chain is Large ribosomal subunit protein bL28, found in Erwinia tasmaniensis (strain DSM 17950 / CFBP 7177 / CIP 109463 / NCPPB 4357 / Et1/99).